The primary structure comprises 124 residues: uncharacterized protein (124 aa).

It belongs to the asfivirus H124R family.

The protein localises to the virion. This is an uncharacterized protein from Ornithodoros (relapsing fever ticks).